A 253-amino-acid chain; its full sequence is Bridging integrator 3 (253 aa).

A BAR domain is found at 9–232 (GQPKKQIVSK…LDQPGHSDEH (224 aa)). Coiled coils occupy residues 16–57 (VSKT…AMSK) and 120–151 (SLNMAVKRREQALQDYGRLQAKVEKYEEKEKT).

The protein resides in the cytoplasm. It is found in the cytoskeleton. In terms of biological role, involved in cytokinesis and septation where it has a role in the localization of F-actin. In Rattus norvegicus (Rat), this protein is Bridging integrator 3 (Bin3).